Consider the following 543-residue polypeptide: Kelch repeat and BTB domain-containing protein 4 (543 aa).

Residues 70–137 (ADVTISVEGR…IYHGTVKLRA (68 aa)) form the BTB domain. The BACK domain maps to 172 to 264 (CLQVMWLADR…SLKEIGENVH (93 aa)). Kelch repeat units lie at residues 264–310 (HIYL…KHGG), 311–353 (DLYV…SVPG), 356–403 (AIYS…NLNG), 405–455 (IYLL…VHKD), and 457–505 (VFIV…YVFR).

As to quaternary structure, component of the BCR(KBTBD4) E3 ubiquitin ligase complex, at least composed of CUL3, KBTBD4 and RBX1.

Substrate-specific adapter of a BCR (BTB-CUL3-RBX1) E3 ubiquitin ligase complex which targets CoREST corepressor complex components RCOR1, KDM1A/LSD1 and HDAC2 for proteasomal degradation. RCOR1 is likely to be the primary target while degradation of KDM1A and HDAC2 is likely due to their association with RCOR1. Also targets RCOR3, MIER2 and MIER3 for proteasomal degradation as well as associated proteins ZNF217 and RREB1. Degradation is dependent on the presence of an ELM2 domain in the target proteins. In Macaca fascicularis (Crab-eating macaque), this protein is Kelch repeat and BTB domain-containing protein 4 (KBTBD4).